We begin with the raw amino-acid sequence, 824 residues long: Spindle-defective protein 2 (824 aa).

Composition is skewed to acidic residues over residues 16–27 (EIEDSPIDDNDN) and 35–44 (GDVELEEEEV). A disordered region spans residues 16–98 (EIEDSPIDDN…SRPASVMSDK (83 aa)). Positions 59 to 70 (TNMTNPKVNDLT) are enriched in polar residues. Residues 81–98 (SAASSRSASRPASVMSDK) are compositionally biased toward low complexity. Residues 111–131 (ENAIEEYTNQVFADENKADLL) adopt a coiled-coil conformation. The segment at 189 to 252 (RAKPGANDNE…GQYQGPNFDL (64 aa)) is disordered. The span at 207–225 (NVPTTSDKSAFITSPMNST) shows a compositional bias: polar residues. The stretch at 304–324 (NNKNQDLFAALEEARKRRAAQ) forms a coiled coil. Disordered stretches follow at residues 342 to 372 (KPTS…LTTS) and 433 to 455 (NNGN…VRTM). Residues 349–366 (SGNVVSSTSNDNTTAASS) show a composition bias toward low complexity.

As to quaternary structure, interacts with sas-7 (via C-terminus); may be recruited to centrioles by sas-7.

Its subcellular location is the cytoplasm. It is found in the cytoskeleton. The protein resides in the microtubule organizing center. The protein localises to the centrosome. It localises to the centriole. Functionally, required both for centrosome duplication and maturation. Required for pericentriolar material (PCM) recruitment. In Caenorhabditis elegans, this protein is Spindle-defective protein 2.